The following is a 125-amino-acid chain: Small ribosomal subunit protein uS13 (125 aa).

This sequence belongs to the universal ribosomal protein uS13 family. In terms of assembly, part of the 30S ribosomal subunit. Forms a loose heterodimer with protein S19. Forms two bridges to the 50S subunit in the 70S ribosome.

In terms of biological role, located at the top of the head of the 30S subunit, it contacts several helices of the 16S rRNA. In the 70S ribosome it contacts the 23S rRNA (bridge B1a) and protein L5 of the 50S subunit (bridge B1b), connecting the 2 subunits; these bridges are implicated in subunit movement. Contacts the tRNAs in the A and P-sites. The protein is Small ribosomal subunit protein uS13 of Rickettsia bellii (strain OSU 85-389).